The primary structure comprises 447 residues: Argininosuccinate synthase (447 aa).

Residues 17–25 and Ala-43 each bind ATP; that span reads AFSGGLDTS. Tyr-99 is a binding site for L-citrulline. ATP-binding residues include Gly-129 and Thr-131. The L-aspartate site is built by Thr-131, Asn-135, and Asp-136. Position 135 (Asn-135) interacts with L-citrulline. Residue Asp-136 coordinates ATP. L-citrulline contacts are provided by Arg-139 and Ser-192. Position 194 (Asp-194) interacts with ATP. The L-citrulline site is built by Thr-201, Glu-203, and Glu-280.

Belongs to the argininosuccinate synthase family. Type 2 subfamily. Homotetramer.

The protein resides in the cytoplasm. The catalysed reaction is L-citrulline + L-aspartate + ATP = 2-(N(omega)-L-arginino)succinate + AMP + diphosphate + H(+). Its pathway is amino-acid biosynthesis; L-arginine biosynthesis; L-arginine from L-ornithine and carbamoyl phosphate: step 2/3. The polypeptide is Argininosuccinate synthase (argG) (Salmonella typhi).